The chain runs to 301 residues: Probable alpha-L-glutamate ligase (301 aa).

One can recognise an ATP-grasp domain in the interval 104–287; sequence LQLLSRRGIG…VAGIIIEHLE (184 aa). ATP contacts are provided by residues Lys141, 178-179, Asp187, and 211-213; these read EY and RSN. Mg(2+) contacts are provided by Asp248, Glu260, and Asn262. Residues Asp248, Glu260, and Asn262 each contribute to the Mn(2+) site.

The protein belongs to the RimK family. The cofactor is Mg(2+). It depends on Mn(2+) as a cofactor.

This Pseudomonas fluorescens (strain Pf0-1) protein is Probable alpha-L-glutamate ligase.